A 497-amino-acid chain; its full sequence is 3-octaprenyl-4-hydroxybenzoate carboxy-lyase (497 aa).

Asn172 provides a ligand contact to Mn(2+). Prenylated FMN contacts are provided by residues 175–177, 189–191, and 194–195; these read IYR, RWL, and RG. Glu238 lines the Mn(2+) pocket. Asp287 (proton donor) is an active-site residue.

The protein belongs to the UbiD family. Homohexamer. Requires prenylated FMN as cofactor. It depends on Mn(2+) as a cofactor.

The protein localises to the cell membrane. It catalyses the reaction a 4-hydroxy-3-(all-trans-polyprenyl)benzoate + H(+) = a 2-(all-trans-polyprenyl)phenol + CO2. It functions in the pathway cofactor biosynthesis; ubiquinone biosynthesis. In terms of biological role, catalyzes the decarboxylation of 3-octaprenyl-4-hydroxy benzoate to 2-octaprenylphenol, an intermediate step in ubiquinone biosynthesis. In Enterobacter sp. (strain 638), this protein is 3-octaprenyl-4-hydroxybenzoate carboxy-lyase.